Here is a 473-residue protein sequence, read N- to C-terminus: H(+)/Cl(-) exchange transporter ClcA (473 aa).

Residues 1-32 (MKTDTPSLETPQAARLRRRQLIRQLLERDKTP) lie on the Cytoplasmic side of the membrane. A helical membrane pass occupies residues 33–69 (LAILFMAAVVGTLVGLAAVAFDKGVAWLQNQRMGALV). Residues 70–76 (HTADNYP) lie on the Periplasmic side of the membrane. Residues 77 to 100 (LLLTVAFLCSAVLAMFGYFLVRKY) traverse the membrane as a helical segment. The Selectivity filter part_1 signature appears at 106-110 (GSGIP). Chloride is bound at residue S107. The helical intramembrane region spans 109–116 (IPEIEGAL). The Cytoplasmic segment spans residues 117-123 (EDQRPVR). 2 consecutive transmembrane segments (helical) span residues 124–141 (WWRV…TLGG) and 148–166 (EGPT…LDVF). The Selectivity filter part_2 signature appears at 146–150 (GREGP). Residues 167–176 (RLKGDEARHT) are Cytoplasmic-facing. Intramembrane regions (helical) lie at residues 177-189 (LLAT…LAAA) and 193-201 (PLAGILFII). Over 202–214 (EEMRPQFRYTLIS) the chain is Cytoplasmic. A helical transmembrane segment spans residues 215-232 (IKAVFIGVIMSTIMYRIF). Residues 233–252 (NHEVALIDVGKLSDAPLNTL) are Periplasmic-facing. A helical transmembrane segment spans residues 253–281 (WLYLILGIIFGIFGPIFNKWVLGMQDLLH). Topologically, residues 282–287 (RVHGGN) are cytoplasmic. Residues 288–309 (ITKWVLMGGAIGGLCGLLGFVA) form a helical membrane-spanning segment. The Periplasmic portion of the chain corresponds to 310-329 (PATSGGGFNLIPIATAGNFS). The next 2 helical transmembrane spans lie at 330-349 (MGML…LCFS) and 355-376 (GIFA…MVAV). Residues 355–359 (GIFAP) carry the Selectivity filter part_3 motif. Chloride-binding residues include I356 and F357. Topologically, residues 377–386 (ELFPQYHLEA) are periplasmic. Residues 387–401 (GTFAIAGMGALLAAS) constitute an intramembrane region (helical). An intramembrane region (note=Loop between two helices) is located at residues 402–404 (IRA). An intramembrane region (helical) is located at residues 405–416 (PLTGIILVLEMT). An intramembrane region (note=Loop between two helices) is located at residues 417–421 (DNYQL). A helical transmembrane segment spans residues 422 to 438 (ILPMIITGLGATLLAQF). Residues 439–473 (TGGKPLYSAILARTLAKQEAEQLARSKAASASENT) lie on the Cytoplasmic side of the membrane. Y445 is a chloride binding site.

The protein belongs to the chloride channel (TC 2.A.49) family. ClcA subfamily. In terms of assembly, homodimer.

It localises to the cell inner membrane. It catalyses the reaction 2 chloride(in) + H(+)(out) = 2 chloride(out) + H(+)(in). In terms of biological role, proton-coupled chloride transporter. Functions as antiport system and exchanges two chloride ions for 1 proton. Probably acts as an electrical shunt for an outwardly-directed proton pump that is linked to amino acid decarboxylation, as part of the extreme acid resistance (XAR) response. In Escherichia coli O157:H7, this protein is H(+)/Cl(-) exchange transporter ClcA.